Here is a 361-residue protein sequence, read N- to C-terminus: Chorismate synthase (361 aa).

Arg-48 is a binding site for NADP(+). FMN contacts are provided by residues Arg-125 to Ser-127, Asn-238 to Ala-239, Gly-278, Lys-293 to Ser-297, and Arg-319.

Belongs to the chorismate synthase family. Homotetramer. The cofactor is FMNH2.

The enzyme catalyses 5-O-(1-carboxyvinyl)-3-phosphoshikimate = chorismate + phosphate. It functions in the pathway metabolic intermediate biosynthesis; chorismate biosynthesis; chorismate from D-erythrose 4-phosphate and phosphoenolpyruvate: step 7/7. Catalyzes the anti-1,4-elimination of the C-3 phosphate and the C-6 proR hydrogen from 5-enolpyruvylshikimate-3-phosphate (EPSP) to yield chorismate, which is the branch point compound that serves as the starting substrate for the three terminal pathways of aromatic amino acid biosynthesis. This reaction introduces a second double bond into the aromatic ring system. The polypeptide is Chorismate synthase (Aliivibrio fischeri (strain MJ11) (Vibrio fischeri)).